We begin with the raw amino-acid sequence, 61 residues long: Large ribosomal subunit protein bL32 (61 aa).

The segment covering 1–16 (MAVPKRKTSPSRRGMR) has biased composition (basic residues). The segment at 1–44 (MAVPKRKTSPSRRGMRRSADALKAPTYVEDKDSGELRRPHHIDL) is disordered. Over residues 28 to 44 (VEDKDSGELRRPHHIDL) the composition is skewed to basic and acidic residues.

It belongs to the bacterial ribosomal protein bL32 family.

The chain is Large ribosomal subunit protein bL32 from Methylobacterium nodulans (strain LMG 21967 / CNCM I-2342 / ORS 2060).